A 390-amino-acid polypeptide reads, in one-letter code: Tryptophan synthase beta chain 2 (390 aa).

The residue at position 83 (lysine 83) is an N6-(pyridoxal phosphate)lysine.

This sequence belongs to the TrpB family. In terms of assembly, tetramer of two alpha and two beta chains. Pyridoxal 5'-phosphate serves as cofactor.

The enzyme catalyses (1S,2R)-1-C-(indol-3-yl)glycerol 3-phosphate + L-serine = D-glyceraldehyde 3-phosphate + L-tryptophan + H2O. Its pathway is amino-acid biosynthesis; L-tryptophan biosynthesis; L-tryptophan from chorismate: step 5/5. Functionally, the beta subunit is responsible for the synthesis of L-tryptophan from indole and L-serine. The chain is Tryptophan synthase beta chain 2 (trpB2) from Methanothermobacter marburgensis (strain ATCC BAA-927 / DSM 2133 / JCM 14651 / NBRC 100331 / OCM 82 / Marburg) (Methanobacterium thermoautotrophicum).